Reading from the N-terminus, the 543-residue chain is Periplasmic oligopeptide-binding protein OppA (543 aa).

The signal sequence occupies residues 1-26; sequence MSNITKKSLIAAGILTALIAASAATA. An intrachain disulfide couples C297 to C443.

Belongs to the bacterial solute-binding protein 5 family. In terms of assembly, the complex is composed of two ATP-binding proteins (OppD and OppF), two transmembrane proteins (OppB and OppC) and a solute-binding protein (OppA).

Its subcellular location is the periplasm. Part of the ABC transporter complex OppABCDF involved in the uptake of oligopeptides, including the cell wall murein tripeptide L-alanyl-gamma-D-glutamyl-meso-diaminopimelate. Plays an important nutritional role and is involved in the recycling of cell wall peptides. Binds peptides containing from two to five amino acid residues regardless of their sequence. Also binds cell wall peptides, such as L-alanyl-gamma-D-glutamyl-meso-diaminopimelate. The chain is Periplasmic oligopeptide-binding protein OppA from Salmonella typhimurium (strain LT2 / SGSC1412 / ATCC 700720).